The primary structure comprises 405 residues: Probable tRNA sulfurtransferase (405 aa).

Positions 60-165 constitute a THUMP domain; that stretch reads AEVDKRLKKV…QDAVYISNQL (106 aa). Residues 183–184, 208–209, Arg265, Gly287, and Gln296 contribute to the ATP site; these read ML and HF.

This sequence belongs to the ThiI family.

It localises to the cytoplasm. It catalyses the reaction [ThiI sulfur-carrier protein]-S-sulfanyl-L-cysteine + a uridine in tRNA + 2 reduced [2Fe-2S]-[ferredoxin] + ATP + H(+) = [ThiI sulfur-carrier protein]-L-cysteine + a 4-thiouridine in tRNA + 2 oxidized [2Fe-2S]-[ferredoxin] + AMP + diphosphate. It carries out the reaction [ThiS sulfur-carrier protein]-C-terminal Gly-Gly-AMP + S-sulfanyl-L-cysteinyl-[cysteine desulfurase] + AH2 = [ThiS sulfur-carrier protein]-C-terminal-Gly-aminoethanethioate + L-cysteinyl-[cysteine desulfurase] + A + AMP + 2 H(+). Its pathway is cofactor biosynthesis; thiamine diphosphate biosynthesis. Catalyzes the ATP-dependent transfer of a sulfur to tRNA to produce 4-thiouridine in position 8 of tRNAs, which functions as a near-UV photosensor. Also catalyzes the transfer of sulfur to the sulfur carrier protein ThiS, forming ThiS-thiocarboxylate. This is a step in the synthesis of thiazole, in the thiamine biosynthesis pathway. The sulfur is donated as persulfide by IscS. This is Probable tRNA sulfurtransferase from Lactobacillus helveticus (strain DPC 4571).